We begin with the raw amino-acid sequence, 358 residues long: Phosphoribosylformylglycinamidine cyclo-ligase (358 aa).

It belongs to the AIR synthase family.

Its subcellular location is the cytoplasm. It carries out the reaction 2-formamido-N(1)-(5-O-phospho-beta-D-ribosyl)acetamidine + ATP = 5-amino-1-(5-phospho-beta-D-ribosyl)imidazole + ADP + phosphate + H(+). It functions in the pathway purine metabolism; IMP biosynthesis via de novo pathway; 5-amino-1-(5-phospho-D-ribosyl)imidazole from N(2)-formyl-N(1)-(5-phospho-D-ribosyl)glycinamide: step 2/2. This chain is Phosphoribosylformylglycinamidine cyclo-ligase, found in Nitrosococcus oceani (strain ATCC 19707 / BCRC 17464 / JCM 30415 / NCIMB 11848 / C-107).